Here is a 1024-residue protein sequence, read N- to C-terminus: Carbamoyl phosphate synthase large chain (1024 aa).

The carboxyphosphate synthetic domain stretch occupies residues 1–402 (MPKRTDLQTI…SLQKALRSTE (402 aa)). Residues arginine 129, arginine 169, glycine 175, glycine 176, glutamate 208, isoleucine 210, glutamate 215, glycine 241, valine 242, histidine 243, glutamine 285, and glutamate 299 each contribute to the ATP site. An ATP-grasp 1 domain is found at 133 to 328 (QAAMKKIGVE…IAKIAALLAV (196 aa)). Residues glutamine 285, glutamate 299, and asparagine 301 each contribute to the Mg(2+) site. The Mn(2+) site is built by glutamine 285, glutamate 299, and asparagine 301. The tract at residues 403 to 546 (GDIRGVYAEM…YSTYEWEDEV (144 aa)) is oligomerization domain. Residues 547 to 929 (APTDKPKVVI…AFYRAQLGAK (383 aa)) form a carbamoyl phosphate synthetic domain region. The ATP-grasp 2 domain occupies 671-863 (NALCERLGLP…LAKSAARIAA (193 aa)). Residues arginine 707, glutamine 747, leucine 749, glutamate 754, glycine 779, valine 780, histidine 781, serine 782, glutamine 822, and glutamate 834 each coordinate ATP. The Mg(2+) site is built by glutamine 822, glutamate 834, and asparagine 836. Glutamine 822, glutamate 834, and asparagine 836 together coordinate Mn(2+). The MGS-like domain maps to 930-1024 (NYLPLEGTAL…GVRSLQEWVK (95 aa)). An allosteric domain region spans residues 930–1024 (NYLPLEGTAL…GVRSLQEWVK (95 aa)).

It belongs to the CarB family. In terms of assembly, composed of two chains; the small (or glutamine) chain promotes the hydrolysis of glutamine to ammonia, which is used by the large (or ammonia) chain to synthesize carbamoyl phosphate. Tetramer of heterodimers (alpha,beta)4. Mg(2+) is required as a cofactor. Mn(2+) serves as cofactor.

It carries out the reaction hydrogencarbonate + L-glutamine + 2 ATP + H2O = carbamoyl phosphate + L-glutamate + 2 ADP + phosphate + 2 H(+). The enzyme catalyses hydrogencarbonate + NH4(+) + 2 ATP = carbamoyl phosphate + 2 ADP + phosphate + 2 H(+). It functions in the pathway amino-acid biosynthesis; L-arginine biosynthesis; carbamoyl phosphate from bicarbonate: step 1/1. Its pathway is pyrimidine metabolism; UMP biosynthesis via de novo pathway; (S)-dihydroorotate from bicarbonate: step 1/3. Its function is as follows. Large subunit of the glutamine-dependent carbamoyl phosphate synthetase (CPSase). CPSase catalyzes the formation of carbamoyl phosphate from the ammonia moiety of glutamine, carbonate, and phosphate donated by ATP, constituting the first step of 2 biosynthetic pathways, one leading to arginine and/or urea and the other to pyrimidine nucleotides. The large subunit (synthetase) binds the substrates ammonia (free or transferred from glutamine from the small subunit), hydrogencarbonate and ATP and carries out an ATP-coupled ligase reaction, activating hydrogencarbonate by forming carboxy phosphate which reacts with ammonia to form carbamoyl phosphate. This chain is Carbamoyl phosphate synthase large chain, found in Deinococcus radiodurans (strain ATCC 13939 / DSM 20539 / JCM 16871 / CCUG 27074 / LMG 4051 / NBRC 15346 / NCIMB 9279 / VKM B-1422 / R1).